Here is a 1411-residue protein sequence, read N- to C-terminus: Protein ECM5 (1411 aa).

The region spanning 118 to 159 (IPTFILAKKELPDPIKFYELVEDLGSVYGCVKLKIIPDADKF) is the JmjN domain. The region spanning 185–279 (RTKIVDFYAK…ILLDFDIYEE (95 aa)) is the ARID domain. The disordered stretch occupies residues 285 to 312 (RNNEKNEDMVESEIFRHSNSRSRDEEEP). In terms of domain architecture, JmjC spans 476–695 (KNILDQWNLD…FSSEAAKWTS (220 aa)). Residues 1238–1290 (TKYCFCRRVEEGTAMVECEICKEWYHVDCISNGELVPPDDPNVLFVCSICTPP) form a PHD-type zinc finger.

The protein resides in the nucleus. May be involved in cell wall organization and biogenesis. The chain is Protein ECM5 (ECM5) from Saccharomyces cerevisiae (strain ATCC 204508 / S288c) (Baker's yeast).